A 620-amino-acid polypeptide reads, in one-letter code: Chaperone protein DnaK (620 aa).

Residue threonine 174 is modified to Phosphothreonine; by autocatalysis. Residues 590 to 620 (AAGAGPDMSGAGPQGDTYAGDDVVDGDYREV) are disordered.

It belongs to the heat shock protein 70 family.

Acts as a chaperone. This chain is Chaperone protein DnaK, found in Lachnoclostridium phytofermentans (strain ATCC 700394 / DSM 18823 / ISDg) (Clostridium phytofermentans).